Consider the following 258-residue polypeptide: MSKVKLTKESIVALLTQGKDLEFEEDQNLVAFNFKTFCLENIDQIKKMSVISCLTFLKNRQSIMKVIKQSDFTFGKITIKKTSDRIGGTDMTFRRLDSLIRVRLVEETGNSENLNTIKSKIASHPLIQAYGLPLDDAKSVRLAIMLGGSLPLIASVDSFEMISVVLAIYQDAKYKDLGIDPKKYDTKEALGKVCTVLKSKAFEMNEDQVKKGKEYAAILSSSNPNAKGSVAMEHYSETLNKFYEMFGVKKQAKLAELA.

It belongs to the tospovirus nucleocapsid protein family. As to quaternary structure, homotrimer. Binds the viral genomic RNA.

The protein resides in the virion. Functionally, encapsidates the genome protecting it from nucleases. The encapsidated genomic RNA is termed the nucleocapsid (NC) and serves as template for transcription and replication. The NC have a helical organization. The chain is Nucleoprotein (N) from Frankliniella occidentalis (Western flower thrips).